The chain runs to 205 residues: Small ribosomal subunit protein uS4 (205 aa).

Positions 95–158 (SRLDNIVYRM…TKSPLVKNFI (64 aa)) constitute an S4 RNA-binding domain.

It belongs to the universal ribosomal protein uS4 family. Part of the 30S ribosomal subunit. Contacts protein S5. The interaction surface between S4 and S5 is involved in control of translational fidelity.

In terms of biological role, one of the primary rRNA binding proteins, it binds directly to 16S rRNA where it nucleates assembly of the body of the 30S subunit. Its function is as follows. With S5 and S12 plays an important role in translational accuracy. The protein is Small ribosomal subunit protein uS4 of Mycoplasma genitalium (strain ATCC 33530 / DSM 19775 / NCTC 10195 / G37) (Mycoplasmoides genitalium).